The following is a 232-amino-acid chain: Small ribosomal subunit protein uS2 (232 aa).

The protein belongs to the universal ribosomal protein uS2 family.

This Heliobacterium modesticaldum (strain ATCC 51547 / Ice1) protein is Small ribosomal subunit protein uS2.